The chain runs to 438 residues: MAALVVSETAEPGSRVGPGRGRISRGRLANQIPPEVLNNPQLQAAVQVLPSNYNFEIPKTIWRIQQAQAKKVALQMPEGLLLFACTIVDILERFTEAEVMVMGDVTYGACCVDDFTARALGVDFLVHYGHSCLVPMDTSVQDFRVLYVFVDIRIDTAHLLDSVRLTFTPGSSLALVSTIQFVSTLQAAAQELKADYHISVPQCKPLSPGEILGCTSPRLSKEVEAVVYLGDGRFHLESVMIANPNIPAYRYDPYGKVLSREYYDHQRMQATRQEAIAAARSAKSWGLILGTLGRQGSPKILEHLESQLRNLGLPFVRLLLSEIFPSKLSLLPEVDVWVQVACPRLSIDWGSAFPKPLLTPYEAAVALKDISWQQPYPMDFYSGSSLGPWTVNYGRDRAPRGLCQPASDKVQQGSRGGSPAPACESCNCADQKATSPAP.

A disordered region spans residues 1–24; sequence MAALVVSETAEPGSRVGPGRGRIS. C110, C214, and C342 together coordinate [4Fe-4S] cluster. The interval 402–438 is disordered; that stretch reads LCQPASDKVQQGSRGGSPAPACESCNCADQKATSPAP. S418 is subject to Phosphoserine.

It belongs to the DPH1/DPH2 family. DPH1 subfamily. As to quaternary structure, component of the 2-(3-amino-3-carboxypropyl)histidine synthase complex composed of DPH1, DPH2, DPH3 and a NADH-dependent reductase. Interacts with DPH2. Interacts with RBM8A. The cofactor is [4Fe-4S] cluster. In terms of tissue distribution, strongly expressed in kidney and liver. Moderately expressed in brain, skin and testis. Weakly expressed in heart, lung, small intestine, spleen, stomach and thymus.

It is found in the nucleus. The protein resides in the cytoplasm. It carries out the reaction L-histidyl-[translation elongation factor 2] + S-adenosyl-L-methionine = 2-[(3S)-amino-3-carboxypropyl]-L-histidyl-[translation elongation factor 2] + S-methyl-5'-thioadenosine + H(+). Its pathway is protein modification; peptidyl-diphthamide biosynthesis. Functionally, catalyzes the first step of diphthamide biosynthesis, a post-translational modification of histidine which occurs in elongation factor 2. DPH1 and DPH2 transfer a 3-amino-3-carboxypropyl (ACP) group from S-adenosyl-L-methionine (SAM) to a histidine residue, the reaction is assisted by a reduction system comprising DPH3 and a NADH-dependent reductase. Acts as a tumor suppressor. In Mus musculus (Mouse), this protein is 2-(3-amino-3-carboxypropyl)histidine synthase subunit 1.